The chain runs to 730 residues: Kinesin-like protein KIF2C (730 aa).

Residues 1-256 are globular; it reads MERLVATRLV…MDCHRISMAD (256 aa). Residues 79 to 98 are disordered; that stretch reads NMPPQRNVSSQNHKRKTISK. Positions 211 to 242 are negative regulator of microtubule-binding; the sequence is EQRAQNYERRMKRAQDYDTSVPNWEFGKMIKE. A Kinesin motor domain is found at 262–592; that stretch reads RICVCVRKRP…LRYADRVKEL (331 aa). Residues arginine 268 and 352–359 contribute to the ATP site; that span reads GQTGSGKT. The stretch at 599–730 forms a coiled coil; sequence TNDDNLQMED…QISKKKRSNK (132 aa).

This sequence belongs to the TRAFAC class myosin-kinesin ATPase superfamily. Kinesin family. MCAK/KIF2 subfamily.

The protein resides in the cytoplasm. It is found in the cytoskeleton. The protein localises to the nucleus. It localises to the chromosome. Its subcellular location is the centromere. The protein resides in the kinetochore. Functionally, promotes ATP-dependent removal of tubulin dimers from microtubules. Regulates the turnover of microtubules at the kinetochore and functions in chromosome segregation during mitosis. May play a role in chromosome congression and may be required for the lateral to end-on conversion of the chromosome-microtubule attachment. The chain is Kinesin-like protein KIF2C (kif2c) from Xenopus laevis (African clawed frog).